The chain runs to 330 residues: Aquaporin Lacbi1:307192 (330 aa).

Topologically, residues 1 to 40 (MSATPIIHLRDVKKRTGVLNAWERVRNKPQVHWAMECFAE) are cytoplasmic. The chain crosses the membrane as a helical span at residues 41 to 61 (ALGVFFYVYFGLGSTAAWVIG). The Extracellular portion of the chain corresponds to 62–71 (NILKQSGLSS). The helical transmembrane segment at 72–92 (VFQIGFAYAFGILFAIGVCAA) threads the bilayer. At 93-124 (TSGGHFNPCVTIAFTIFRGFPPLKAVRYIVAQ) the chain is on the cytoplasmic side. The short motif at 99 to 101 (NPC) is the NPA 1 element. The helical transmembrane segment at 125–145 (ILGAYIASALVYNQWKVLIVE) threads the bilayer. The Extracellular segment spans residues 146-157 (SELLLKQAGVYE). Residues 158-178 (TTMFTPNGPAGIFALYLLPGA) form a helical membrane-spanning segment. Residues 179-183 (QTLPR) are Cytoplasmic-facing. The helical transmembrane segment at 184–204 (AFLNEFVNCFVLALVIWAALD) threads the bilayer. Residues 205 to 207 (PTS) are Extracellular-facing. Residues 208–228 (FMIPPVMAPFIIAAAYAGSIW) traverse the membrane as a helical segment. The Cytoplasmic segment spans residues 229–264 (GYAVPAISLNSARDIGCRLFALTIWGKSAAGGSYSA). The short motif at 238 to 240 (NSA) is the NPA 2 element. A helical membrane pass occupies residues 265-285 (ITALVNIPATLLAAVVYELFL). Residues 286–330 (VDSDRVVAGSHLEFMNVAANHRRHRHQAEDDNHGDADDSSQEKPV) lie on the Extracellular side of the membrane. The interval 308–330 (RHRHQAEDDNHGDADDSSQEKPV) is disordered. Positions 312–330 (QAEDDNHGDADDSSQEKPV) are enriched in basic and acidic residues.

It belongs to the MIP/aquaporin (TC 1.A.8) family.

Its subcellular location is the membrane. Water channel-like protein that does not show transport of water nor ammonium across membranes. In Laccaria bicolor (strain S238N-H82 / ATCC MYA-4686) (Bicoloured deceiver), this protein is Aquaporin Lacbi1:307192.